We begin with the raw amino-acid sequence, 938 residues long: MSHTPHNRRHESERLSATIRFLGNLLGDVIREQAGEAAFQLVERLRTLGKELRNGAPDRADAELRMMAARMTVADIQIVIKAFNAYFLLVNLAEQMQRVWVLRDRERKYPDTPRPESIAAAIAELHACGIPATTIQEWLDTACIQPVFTAHPTEARRRTALEKVRRLATLLDERTGDLHGFVREENTMRIREEIVSLWQTDEVRVVKPTVIDEVKNGMFYFESGLFDLIPRLYRELEYALRTTYPTHEWRVPPLLRYGAWMGGDRDGNPNVTHTVTIQAVRMMRAAAIERHIAAVEELSHRLGQSVRQAPVSDELRESLAHDASLFPEVADMLARRNPYELYRQKCTYIREKLIRTLDYARTASLDWGRSDSPPKGAYFSRTDLLDDLHVMERSLLSNNAAIVANGALRDLIRQAEVFGLHTATLDIRQHSERHTAALAEVLAAAGVCADYTALNEIERIELLSREIENPRPLIPTRLDYSPDTVEVIATFRAVASILERLSPEAVETCIVSMTRGASDLLAPLLLAKEAGLFRPFRFSRLSMAPLFETGADLACCDEVLEACMRLPIYRNHLALRGFVQEVMIGYSDSNKDVGYAAANWAIYQAQRKLRDFGRRHGIQMRLFHGRGGAIGRGGGPANHAILAQPPGSIGNQIKITEQGEVIADRYGLPLLAHRHIEQVINAVLRAGLLQRDDPPDEWTQALERLAALSQRHYRALVYERSDFVPYFRNVTPIAEISRLNIGSRPASRRNTERIEDLRAIPWVFSWMQSRHTLPGWYGLGFALETFVYAGEQSDASGSAIDRLALLQEMYARWSFFRVMIDNAQMILGKADLHIASRYAELAPDQNAAAAIFAAIREEYQRASRMIRQVARIERLLDNAPVLQHSIQRRNPYIDPMSYLQIELLRRLRAAPDGPDHAAIEDAILLSISGLAAGLMNTG.

Active-site residues include His-151 and Lys-591.

It belongs to the PEPCase type 1 family. The cofactor is Mg(2+).

The enzyme catalyses oxaloacetate + phosphate = phosphoenolpyruvate + hydrogencarbonate. Forms oxaloacetate, a four-carbon dicarboxylic acid source for the tricarboxylic acid cycle. This Roseiflexus castenholzii (strain DSM 13941 / HLO8) protein is Phosphoenolpyruvate carboxylase.